Reading from the N-terminus, the 442-residue chain is MGVYSLLVLGATTSLTGAASACQTWPSCNGQWFALQSLDLVVVWGHRTAAALTGLAVVGAAVLAWRTGASRRVRTAVTLALALYPVQVVIGAYTAMSAGAAPFTGVHLTLGVGIFASLVVALAWTLDAQTGDLPSAEWEGEPRHTDDGDPTQPGIVRAYVQLMKPRLMWLLCLVAGAGMALASSQLGAGQQLSAATVVLTLGGGVLSIGASGTFNHVLEREQDEKMARTDDRPVVTDRIPPRNALAFGVVLGVASLAAFAAVNLLTAVLGLTAIAFYSIVYTLVLKPNTRQSTVIGGAAGALPALIGWVAVTGAVGVGGVVLAGVIFLWTPAHFYNLALAYKDDYERGGFPLMPVVEGEAKTRRHIVYYIGATLASAVVLAELTGLGPLYAATTVLLGAVFLYFAIRLHRERDRRAAMRSFHASNAYLGCLLVAVVLDTMVV.

The interval 1-167 is unknown; the sequence is MGVYSLLVLG…AYVQLMKPRL (167 aa). The next 11 helical transmembrane spans lie at 49–69, 76–96, 106–126, 167–187, 194–214, 245–265, 267–287, 308–328, 365–385, 386–406, and 421–441; these read AAAL…RTGA, AVTL…YTAM, VHLT…AWTL, LMWL…SQLG, AATV…SGTF, LAFG…VNLL, AVLG…VLKP, WVAV…VIFL, HIVY…ELTG, LGPL…YFAI, and FHAS…DTMV. The segment at 168-439 is prenyltransferase; sequence MWLLCLVAGA…CLLVAVVLDT (272 aa).

It in the C-terminal section; belongs to the UbiA prenyltransferase family. Protoheme IX farnesyltransferase subfamily.

It localises to the cell membrane. The enzyme catalyses heme b + (2E,6E)-farnesyl diphosphate + H2O = Fe(II)-heme o + diphosphate. It participates in porphyrin-containing compound metabolism; heme O biosynthesis; heme O from protoheme: step 1/1. Its function is as follows. Converts heme B (protoheme IX) to heme O by substitution of the vinyl group on carbon 2 of heme B porphyrin ring with a hydroxyethyl farnesyl side group. This Halobacterium salinarum (strain ATCC 700922 / JCM 11081 / NRC-1) (Halobacterium halobium) protein is Protoheme IX farnesyltransferase (ctaB).